Consider the following 186-residue polypeptide: Protein GrpE (186 aa).

Residues 1-17 are compositionally biased toward basic and acidic residues; the sequence is MKDEHNQEHDLSQKELE. A disordered region spans residues 1-32; that stretch reads MKDEHNQEHDLSQKELESCENSCTCEGKKQEA.

It belongs to the GrpE family. Homodimer.

It localises to the cytoplasm. Its function is as follows. Participates actively in the response to hyperosmotic and heat shock by preventing the aggregation of stress-denatured proteins, in association with DnaK and GrpE. It is the nucleotide exchange factor for DnaK and may function as a thermosensor. Unfolded proteins bind initially to DnaJ; upon interaction with the DnaJ-bound protein, DnaK hydrolyzes its bound ATP, resulting in the formation of a stable complex. GrpE releases ADP from DnaK; ATP binding to DnaK triggers the release of the substrate protein, thus completing the reaction cycle. Several rounds of ATP-dependent interactions between DnaJ, DnaK and GrpE are required for fully efficient folding. The sequence is that of Protein GrpE from Helicobacter acinonychis (strain Sheeba).